The sequence spans 419 residues: Dynein regulatory complex protein 9 (419 aa).

2 disordered regions span residues 25–45 (TGEP…EETS) and 394–419 (NFKM…RRKK). Positions 30 to 45 (EAAEEDLDYEEEEETS) are enriched in acidic residues. The IQ domain maps to 372-401 (ELRSIVKLQAWWRGSVVRKEIGNFKMPKKD). Positions 394–413 (NFKMPKKDKDDSKDSKGKEK) are enriched in basic and acidic residues.

Belongs to the DRC9 family. Component of the nexin-dynein regulatory complex (N-DRC). Interacts (via IQ domain) with CALM when calcium levels are low. Does not interact with CALM in the presence of Ca(2+). Interacts with the HSP70 proteins HSPA1L and HSPA8. May form a complex with CAMK4 and HSP70. In terms of tissue distribution, expressed in the testes (at protein level). Also detected in oviduct (at protein level). Also detected in the trachea.

It is found in the cytoplasm. The protein localises to the cell projection. The protein resides in the cilium. It localises to the flagellum. Its subcellular location is the cytoskeleton. It is found in the flagellum axoneme. Functionally, component of the nexin-dynein regulatory complex (N-DRC), a key regulator of ciliary/flagellar motility which maintains the alignment and integrity of the distal axoneme and regulates microtubule sliding in motile axonemes. Binds calmodulin when cellular Ca(2+) levels are low and thereby contributes to the regulation of calcium and calmodulin-dependent protein kinase IV (CAMK4) activity; contributes to the regulation of CAMK4 signaling cascades. Required for normal axoneme assembly in sperm flagella, normal sperm tail formation and for male fertility. The chain is Dynein regulatory complex protein 9 (Iqcg) from Mus musculus (Mouse).